The chain runs to 194 residues: Protein GrpE (194 aa).

This sequence belongs to the GrpE family. Homodimer.

The protein resides in the cytoplasm. In terms of biological role, participates actively in the response to hyperosmotic and heat shock by preventing the aggregation of stress-denatured proteins, in association with DnaK and GrpE. It is the nucleotide exchange factor for DnaK and may function as a thermosensor. Unfolded proteins bind initially to DnaJ; upon interaction with the DnaJ-bound protein, DnaK hydrolyzes its bound ATP, resulting in the formation of a stable complex. GrpE releases ADP from DnaK; ATP binding to DnaK triggers the release of the substrate protein, thus completing the reaction cycle. Several rounds of ATP-dependent interactions between DnaJ, DnaK and GrpE are required for fully efficient folding. In Aliivibrio salmonicida (strain LFI1238) (Vibrio salmonicida (strain LFI1238)), this protein is Protein GrpE.